A 149-amino-acid chain; its full sequence is Large ribosomal subunit protein bL9 (149 aa).

The protein belongs to the bacterial ribosomal protein bL9 family.

Functionally, binds to the 23S rRNA. The protein is Large ribosomal subunit protein bL9 of Aquifex aeolicus (strain VF5).